The chain runs to 314 residues: 4-hydroxy-3-methylbut-2-enyl diphosphate reductase (314 aa).

[4Fe-4S] cluster is bound at residue Cys12. 2 residues coordinate (2E)-4-hydroxy-3-methylbut-2-enyl diphosphate: His41 and His74. Positions 41 and 74 each coordinate dimethylallyl diphosphate. Isopentenyl diphosphate contacts are provided by His41 and His74. Cys96 contributes to the [4Fe-4S] cluster binding site. Residue His124 coordinates (2E)-4-hydroxy-3-methylbut-2-enyl diphosphate. Dimethylallyl diphosphate is bound at residue His124. His124 provides a ligand contact to isopentenyl diphosphate. Glu126 (proton donor) is an active-site residue. Thr167 is a (2E)-4-hydroxy-3-methylbut-2-enyl diphosphate binding site. Position 197 (Cys197) interacts with [4Fe-4S] cluster. Residues Ser225, Ser226, Asn227, and Ser269 each coordinate (2E)-4-hydroxy-3-methylbut-2-enyl diphosphate. Ser225, Ser226, Asn227, and Ser269 together coordinate dimethylallyl diphosphate. Isopentenyl diphosphate is bound by residues Ser225, Ser226, Asn227, and Ser269.

Belongs to the IspH family. It depends on [4Fe-4S] cluster as a cofactor.

It carries out the reaction isopentenyl diphosphate + 2 oxidized [2Fe-2S]-[ferredoxin] + H2O = (2E)-4-hydroxy-3-methylbut-2-enyl diphosphate + 2 reduced [2Fe-2S]-[ferredoxin] + 2 H(+). The enzyme catalyses dimethylallyl diphosphate + 2 oxidized [2Fe-2S]-[ferredoxin] + H2O = (2E)-4-hydroxy-3-methylbut-2-enyl diphosphate + 2 reduced [2Fe-2S]-[ferredoxin] + 2 H(+). The protein operates within isoprenoid biosynthesis; dimethylallyl diphosphate biosynthesis; dimethylallyl diphosphate from (2E)-4-hydroxy-3-methylbutenyl diphosphate: step 1/1. It functions in the pathway isoprenoid biosynthesis; isopentenyl diphosphate biosynthesis via DXP pathway; isopentenyl diphosphate from 1-deoxy-D-xylulose 5-phosphate: step 6/6. Catalyzes the conversion of 1-hydroxy-2-methyl-2-(E)-butenyl 4-diphosphate (HMBPP) into a mixture of isopentenyl diphosphate (IPP) and dimethylallyl diphosphate (DMAPP). Acts in the terminal step of the DOXP/MEP pathway for isoprenoid precursor biosynthesis. This chain is 4-hydroxy-3-methylbut-2-enyl diphosphate reductase, found in Haemophilus influenzae (strain 86-028NP).